A 139-amino-acid polypeptide reads, in one-letter code: D-ribose pyranase (139 aa).

Residue His-20 is the Proton donor of the active site. Substrate is bound by residues Asp-28, His-106, and 128 to 130 (YAN).

It belongs to the RbsD / FucU family. RbsD subfamily. As to quaternary structure, homodecamer.

It is found in the cytoplasm. It carries out the reaction beta-D-ribopyranose = beta-D-ribofuranose. Its pathway is carbohydrate metabolism; D-ribose degradation; D-ribose 5-phosphate from beta-D-ribopyranose: step 1/2. Catalyzes the interconversion of beta-pyran and beta-furan forms of D-ribose. This Aliivibrio fischeri (strain MJ11) (Vibrio fischeri) protein is D-ribose pyranase.